The chain runs to 412 residues: Adherens junction-associated protein 1 (412 aa).

An N-terminal signal peptide occupies residues 1–43; sequence MWIQQLLGLSSMSIRWPGRSLGSHAWILIAMLQLAVDFPSCDS. Over 44-284 the chain is Extracellular; that stretch reads LGPGPEFRLL…GETSGLAVHQ (241 aa). Disordered regions lie at residues 62-175 and 243-271; these read LWSL…GRPT and DPWK…IQPP. Residues 121–146 show a composition bias toward low complexity; it reads PPAATRSSPSLASATASSSIVTAGAA. The span at 160-171 shows a compositional bias: basic and acidic residues; sequence HDTEFNDFDFRG. Residues 248 to 263 show a composition bias toward low complexity; that stretch reads TPVGVSTTEPSTSPSS. The helical transmembrane segment at 285-305 threads the bilayer; that stretch reads IITITVSLIMVIAALITTLVL. The interval 305 to 412 is targeting signals; sequence LKNCCAPSGH…VSEKWFEISC (108 aa). The Cytoplasmic segment spans residues 306–412; the sequence is KNCCAPSGHT…VSEKWFEISC (107 aa).

Forms a complex with CDH1 and CTNNB1; interacts directly with CTNNB1. Interacts with AP1M2 and isoform 2 of BSG/CD147.

The protein localises to the basolateral cell membrane. It is found in the apical cell membrane. The protein resides in the cell junction. Its subcellular location is the adherens junction. Plays a role in cell adhesion and cell migration. In Mus musculus (Mouse), this protein is Adherens junction-associated protein 1 (Ajap1).